Reading from the N-terminus, the 660-residue chain is Cysteine--tRNA ligase, cytoplasmic (660 aa).

Polar residues predominate over residues 1 to 10; that stretch reads MSENSSPKLE. The disordered stretch occupies residues 1-20; sequence MSENSSPKLESTSAAAASTK. Position 65 (cysteine 65) interacts with Zn(2+). A 'HIGH' region motif is present at residues 67–77; the sequence is PTVYDASHMGH. Positions 256, 281, and 285 each coordinate Zn(2+). Residues 314-318 carry the 'KMSKS' region motif; the sequence is KMSKS. Lysine 317 lines the ATP pocket. 2 disordered regions span residues 563 to 584 and 627 to 660; these read IEKK…KFEK and QKEY…QSPQ. Over residues 627–639 the composition is skewed to basic and acidic residues; sequence QKEYDNQTKEHNN. Residues 643–660 are compositionally biased toward low complexity; the sequence is SLSTSTSSPTLTSTQSPQ.

Belongs to the class-I aminoacyl-tRNA synthetase family. It depends on Zn(2+) as a cofactor.

It is found in the cytoplasm. The catalysed reaction is tRNA(Cys) + L-cysteine + ATP = L-cysteinyl-tRNA(Cys) + AMP + diphosphate. The sequence is that of Cysteine--tRNA ligase, cytoplasmic (cysS) from Dictyostelium discoideum (Social amoeba).